A 707-amino-acid chain; its full sequence is G protein-coupled receptor kinase 2 (707 aa).

Residues 1–190 (MADLEAVLAD…ELNMQLTMND (190 aa)) are N-terminal. Residues 54-175 (KFDKIFNQKL…LESDKFTRFC (122 aa)) form the RGS domain. One can recognise a Protein kinase domain in the interval 191-455 (FSVHRIIGRG…PTEVKEHPFF (265 aa)). Residues 197 to 205 (IGRGGFGEV) and Lys-220 each bind ATP. Residue Asp-318 is the Proton acceptor of the active site. The 68-residue stretch at 456-523 (KDVDWQTVYL…VISERWQNEI (68 aa)) folds into the AGC-kinase C-terminal domain. The 101-residue stretch at 558–658 (DVIVHGYIKK…WHTSLRTAHK (101 aa)) folds into the PH domain.

It belongs to the protein kinase superfamily. AGC Ser/Thr protein kinase family. GPRK subfamily. In terms of assembly, interacts with amx-2; the interaction promotes phosphorylation of amx-2. Expressed in many neurons in the adult including the ASH neurons and other sensory neurons, many interneurons, and motor neurons of the ventral nerve cord. Expressed broadly in head neurons and is detected in several head acetylcholine neurons including the AVA, AVB, AVD and AVE premotor interneurons, the SMD and RMD head motor neurons, and the AIN, AIY, SIA, SIB and SAA interneurons. Expressed in HSN motor neurons and VC4/VC5 motor neurons. Also expressed in vulval muscle cells. Expressed in premotor and RIS interneurons. Expressed in ciliated neurons such as AWA, AWB, AWC, ASH and ADF olfactory and nociceptive neurons, and in chemosensory ASH neurons. Expressed in RMG neurons and AVK interneurons.

It catalyses the reaction [G-protein-coupled receptor] + ATP = [G-protein-coupled receptor]-phosphate + ADP + H(+). Functionally, specifically phosphorylates the activated forms of G protein-coupled receptors. Required in adult sensory neurons for chemotaxis. Plays a role in the ASH sensory neurons in the chemotaxis response to NaCl where it is likely to modulate the strength of the NaCl avoidance response which occurs at high NaCl concentrations. Required in the HSN motor neurons for normal egg laying by promoting phosphorylation of amine oxidase amx-2 which inhibits amx-2 activity, preventing metabolism of serotonin. Acts in head acetylcholine neurons to positively regulate locomotion. Inactivates dopamine receptor dop-3 which leads to inactivation of guanine nucleotide-binding protein G(o) subunit goa-1 and activation of the unc-77/nca-1 and nca-2 ion channel proteins. Acts as a positive regulator of swimming by inactivating two dopamine receptors, dop-3 in the premotor interneurons that negatively controls early swimming through the nca ion channel, and dop-1 in the RIS neuron that inhibits late-stage swimming via the signaling of FMRFamide-like neuropeptide flp-11. Controls movement quiescence by negatively regulating multiple targets including egl-4 in ciliated neurons, the level of ligands of the neuropeptide receptor npr-1 in RMG neurons, and the secretion of flp-1 from AVK interneurons. The sequence is that of G protein-coupled receptor kinase 2 (grk-2) from Caenorhabditis elegans.